Here is a 253-residue protein sequence, read N- to C-terminus: MTTIDLNCDLGESFGAYKMGNDDEILPFVSSINVACGFHAGDPSVMRQTVEKAMQHNVAIGAHPGFPDLIGFGRRNMNVPASEVYDYVLYQIGALDGFVKAAGGKMHHVKPHGALYNMAATNPEIADAIAKAIYHINPSLLLYGLANSEAFIQAAEKYNITLIQEAFADRTYKQDGTLTSRTEENALIKNEEEAIKQVLQMVKEGYVNSVNGEKVAVQAQTICLHGDGEKAVQFAKRIYRTFEHNGISICAPK.

This sequence belongs to the LamB/PxpA family. Forms a complex composed of PxpA, PxpB and PxpC.

The catalysed reaction is 5-oxo-L-proline + ATP + 2 H2O = L-glutamate + ADP + phosphate + H(+). Its function is as follows. Catalyzes the cleavage of 5-oxoproline to form L-glutamate coupled to the hydrolysis of ATP to ADP and inorganic phosphate. The polypeptide is 5-oxoprolinase subunit A (Bacillus cereus (strain AH187)).